The sequence spans 362 residues: Chorismate synthase (362 aa).

Residue arginine 47 participates in NADP(+) binding. Residues 124–126, glycine 286, 301–305, and arginine 327 contribute to the FMN site; these read RSS and KPTAT.

The protein belongs to the chorismate synthase family. In terms of assembly, homotetramer. FMNH2 serves as cofactor.

It carries out the reaction 5-O-(1-carboxyvinyl)-3-phosphoshikimate = chorismate + phosphate. It participates in metabolic intermediate biosynthesis; chorismate biosynthesis; chorismate from D-erythrose 4-phosphate and phosphoenolpyruvate: step 7/7. Catalyzes the anti-1,4-elimination of the C-3 phosphate and the C-6 proR hydrogen from 5-enolpyruvylshikimate-3-phosphate (EPSP) to yield chorismate, which is the branch point compound that serves as the starting substrate for the three terminal pathways of aromatic amino acid biosynthesis. This reaction introduces a second double bond into the aromatic ring system. The protein is Chorismate synthase of Nostoc punctiforme (strain ATCC 29133 / PCC 73102).